Here is a 456-residue protein sequence, read N- to C-terminus: Ribosomal RNA small subunit methyltransferase F (456 aa).

S-adenosyl-L-methionine-binding positions include 109-115 (AAAPGGK), Glu133, Arg138, and Asp177. Cys230 serves as the catalytic Nucleophile.

This sequence belongs to the class I-like SAM-binding methyltransferase superfamily. RsmB/NOP family.

The protein localises to the cytoplasm. It carries out the reaction cytidine(1400) in 16S rRNA + S-adenosyl-L-methionine = 5-methylcytidine(1400) in 16S rRNA + S-adenosyl-L-homocysteine + H(+). The enzyme catalyses cytidine(1404) in 16S rRNA + S-adenosyl-L-methionine = 5-methylcytidine(1404) in 16S rRNA + S-adenosyl-L-homocysteine + H(+). It catalyses the reaction cytidine(1407) in 16S rRNA + S-adenosyl-L-methionine = 5-methylcytidine(1407) in 16S rRNA + S-adenosyl-L-homocysteine + H(+). Its function is as follows. Specifically methylates the cytosines at positions 1400 (m5C1400), 1404 (m5C1404) and 1407 (m5C1407) of 16S rRNA. C1400, C1404 and C1407 are methylated in a 30S subunit substrate, but only C1400 and C1404 are methylated when naked 16S rRNA is the substrate. Methylation by RsmF may facilitate growth at temperatures outside the optimal growth temperature. The protein is Ribosomal RNA small subunit methyltransferase F of Thermus thermophilus (strain ATCC 27634 / DSM 579 / HB8).